The sequence spans 255 residues: 5'-nucleotidase SurE (255 aa).

A divalent metal cation contacts are provided by Asp-16, Asp-17, Ser-47, and Asn-100.

This sequence belongs to the SurE nucleotidase family. Requires a divalent metal cation as cofactor.

It is found in the cytoplasm. The catalysed reaction is a ribonucleoside 5'-phosphate + H2O = a ribonucleoside + phosphate. In terms of biological role, nucleotidase that shows phosphatase activity on nucleoside 5'-monophosphates. The chain is 5'-nucleotidase SurE from Vibrio vulnificus (strain CMCP6).